The chain runs to 236 residues: Orotidine 5'-phosphate decarboxylase (236 aa).

Residues aspartate 17, lysine 39, 66-75 (DLKFHDIPNT), threonine 125, arginine 186, glutamine 195, glycine 215, and arginine 216 each bind substrate. Lysine 68 acts as the Proton donor in catalysis.

It belongs to the OMP decarboxylase family. Type 1 subfamily. As to quaternary structure, homodimer.

It catalyses the reaction orotidine 5'-phosphate + H(+) = UMP + CO2. The protein operates within pyrimidine metabolism; UMP biosynthesis via de novo pathway; UMP from orotate: step 2/2. In terms of biological role, catalyzes the decarboxylation of orotidine 5'-monophosphate (OMP) to uridine 5'-monophosphate (UMP). This Buchnera aphidicola subsp. Acyrthosiphon pisum (strain APS) (Acyrthosiphon pisum symbiotic bacterium) protein is Orotidine 5'-phosphate decarboxylase.